Consider the following 267-residue polypeptide: MYKFAVFGNPIKHSLSPNIHIQFAQQTGFEVSYDKILAPIDDFSSSAQAFINQGANGFNITVPFKLDAFKFASELTLNAQIAGAVNTIKIEQDKIIGENTDGIGLVNDLTHNLGIELKDKVILILGAGGATQGILLPLLKQQPNHVMIANRTPFKAIKLAKDFAKFGKTCGFDLDKIKHDPVNIIINATSTSLYGKMPDIASGVANNAICYDLMYGKQTPFMDWATINHGSMISDGLGMLIEQAAVAFEFWTGVKPNTEQVLSNLRS.

Residues 14-16 and threonine 61 each bind shikimate; that span reads SLS. The active-site Proton acceptor is the lysine 65. The shikimate site is built by asparagine 86 and aspartate 101. NADP(+) contacts are provided by residues 126-130, 150-155, and leucine 213; these read GAGGA and NRTPFK. Tyrosine 215 lines the shikimate pocket. Glycine 236 is an NADP(+) binding site.

It belongs to the shikimate dehydrogenase family. Homodimer.

The enzyme catalyses shikimate + NADP(+) = 3-dehydroshikimate + NADPH + H(+). It functions in the pathway metabolic intermediate biosynthesis; chorismate biosynthesis; chorismate from D-erythrose 4-phosphate and phosphoenolpyruvate: step 4/7. In terms of biological role, involved in the biosynthesis of the chorismate, which leads to the biosynthesis of aromatic amino acids. Catalyzes the reversible NADPH linked reduction of 3-dehydroshikimate (DHSA) to yield shikimate (SA). This chain is Shikimate dehydrogenase (NADP(+)), found in Ruthia magnifica subsp. Calyptogena magnifica.